The following is a 113-amino-acid chain: Putative anti-sigma factor antagonist TM_1081 (113 aa).

One can recognise an STAS domain in the interval 1-110 (MFPYKIVDDV…DTISEAMEEV (110 aa)). S55 carries the post-translational modification Phosphoserine.

This sequence belongs to the anti-sigma-factor antagonist family. Post-translationally, phosphorylated on a serine residue.

In the phosphorylated form it could act as an anti-anti-sigma factor that counteracts an anti-sigma factor and thus releases a sigma factor from inhibition. The sequence is that of Putative anti-sigma factor antagonist TM_1081 from Thermotoga maritima (strain ATCC 43589 / DSM 3109 / JCM 10099 / NBRC 100826 / MSB8).